Here is a 132-residue protein sequence, read N- to C-terminus: ATP synthase epsilon chain, chloroplastic (132 aa).

N-acetylthreonine is present on Thr2.

It belongs to the ATPase epsilon chain family. F-type ATPases have 2 components, CF(1) - the catalytic core - and CF(0) - the membrane proton channel. CF(1) has five subunits: alpha(3), beta(3), gamma(1), delta(1), epsilon(1). CF(0) has three main subunits: a, b and c.

It is found in the plastid. Its subcellular location is the chloroplast thylakoid membrane. Its function is as follows. Produces ATP from ADP in the presence of a proton gradient across the membrane. This chain is ATP synthase epsilon chain, chloroplastic, found in Arabidopsis thaliana (Mouse-ear cress).